We begin with the raw amino-acid sequence, 162 residues long: Phosphopantetheine adenylyltransferase (162 aa).

Substrate is bound at residue S11. Residues 11 to 12 (SF) and H19 each bind ATP. Substrate is bound by residues K43, T75, and R89. ATP-binding positions include 90 to 92 (GLR), E100, and 125 to 131 (YAFLSSS).

This sequence belongs to the bacterial CoaD family. Homohexamer. Requires Mg(2+) as cofactor.

It localises to the cytoplasm. It catalyses the reaction (R)-4'-phosphopantetheine + ATP + H(+) = 3'-dephospho-CoA + diphosphate. It participates in cofactor biosynthesis; coenzyme A biosynthesis; CoA from (R)-pantothenate: step 4/5. Its function is as follows. Reversibly transfers an adenylyl group from ATP to 4'-phosphopantetheine, yielding dephospho-CoA (dPCoA) and pyrophosphate. This Finegoldia magna (strain ATCC 29328 / DSM 20472 / WAL 2508) (Peptostreptococcus magnus) protein is Phosphopantetheine adenylyltransferase.